The chain runs to 378 residues: MAKRDYYEVLGVAKNASDDEIKKAYRKLAMKYHPDRNPDSKDAEEHFKEAKEAYEMLSDGQKRAAYDQYGHAGVDPNMGGAGAQGFGGFADAFGDIFGDIFGQAAGGAARGGRGGPQVYRGADLRYSMEITLEQAAHGYDTQIRVPSWVSCEVCHGSGAKPGTKPETCPTCHGQGTVRMSQGFFSIQQTCPKCHGTGTYIPEPCAHCHGSGKVKETKTLEVKIPAGIDDGMRIRSAGNGEPGINGGPPGDLYVEIHIKPHSVFERDGDDLHCQMPIPFTTAALGGEIEVPTLAGRASFPVPEGTQSGKTFRLRGKGIKGLRSSIAGDLYVHVQVETPVKLTDQQRDLLKQFEKSLAEGGARHSPQSKSWFDRVKSFFE.

Residues 5–70 (DYYEVLGVAK…QKRAAYDQYG (66 aa)) form the J domain. The CR-type zinc-finger motif lies at 138 to 216 (GYDTQIRVPS…CHGSGKVKET (79 aa)). Zn(2+)-binding residues include Cys151, Cys154, Cys168, Cys171, Cys190, Cys193, Cys204, and Cys207. 4 CXXCXGXG motif repeats span residues 151–158 (CEVCHGSG), 168–175 (CPTCHGQG), 190–197 (CPKCHGTG), and 204–211 (CAHCHGSG).

It belongs to the DnaJ family. Homodimer. Zn(2+) serves as cofactor.

It localises to the cytoplasm. Its function is as follows. Participates actively in the response to hyperosmotic and heat shock by preventing the aggregation of stress-denatured proteins and by disaggregating proteins, also in an autonomous, DnaK-independent fashion. Unfolded proteins bind initially to DnaJ; upon interaction with the DnaJ-bound protein, DnaK hydrolyzes its bound ATP, resulting in the formation of a stable complex. GrpE releases ADP from DnaK; ATP binding to DnaK triggers the release of the substrate protein, thus completing the reaction cycle. Several rounds of ATP-dependent interactions between DnaJ, DnaK and GrpE are required for fully efficient folding. Also involved, together with DnaK and GrpE, in the DNA replication of plasmids through activation of initiation proteins. In Burkholderia cenocepacia (strain HI2424), this protein is Chaperone protein DnaJ.